Reading from the N-terminus, the 881-residue chain is Leucine--tRNA ligase (881 aa).

The 'HIGH' region motif lies at 48-58 (PYPSGKLHMGH). A 'KMSKS' region motif is present at residues 638 to 642 (KMSKS). ATP is bound at residue lysine 641.

Belongs to the class-I aminoacyl-tRNA synthetase family.

The protein localises to the cytoplasm. It carries out the reaction tRNA(Leu) + L-leucine + ATP = L-leucyl-tRNA(Leu) + AMP + diphosphate. In Herminiimonas arsenicoxydans, this protein is Leucine--tRNA ligase.